A 185-amino-acid polypeptide reads, in one-letter code: Ribosome-recycling factor (185 aa).

The protein belongs to the RRF family.

The protein localises to the cytoplasm. Its function is as follows. Responsible for the release of ribosomes from messenger RNA at the termination of protein biosynthesis. May increase the efficiency of translation by recycling ribosomes from one round of translation to another. This chain is Ribosome-recycling factor, found in Alkalilimnicola ehrlichii (strain ATCC BAA-1101 / DSM 17681 / MLHE-1).